Reading from the N-terminus, the 389-residue chain is Pyruvate dehydrogenase E1 component subunit alpha, somatic form, mitochondrial (389 aa).

The transit peptide at 1–28 directs the protein to the mitochondrion; the sequence is GKMLAAVSRVLSGVAQKPASRVLVASRT. Lys62 is modified (N6-acetyllysine; alternate). Lys62 is subject to N6-succinyllysine; alternate. Pyruvate-binding residues include His91, Tyr117, Arg118, Ala156, Gly164, Val166, Asp195, Gly196, Ala197, Asn224, and Tyr226. Thiamine diphosphate is bound by residues Tyr117 and Arg118. Thiamine diphosphate contacts are provided by Gly164, Val166, Asp195, Gly196, Ala197, and Asn224. Asp195 contacts Mg(2+). Residues Asn224 and Tyr226 each coordinate Mg(2+). Ser231 carries the post-translational modification Phosphoserine; by PDK1. At Lys243 the chain carries N6-acetyllysine; alternate. Position 243 is an N6-succinyllysine; alternate (Lys243). Lys276 bears the N6-succinyllysine mark. His291 lines the thiamine diphosphate pocket. Position 292 is a phosphoserine; by PDK1, PDK2, PDK3 and PDK4 (Ser292). Ser294 carries the post-translational modification Phosphoserine. A Phosphoserine; by PDK1, PDK2, PDK3 and PDK4 modification is found at Ser299. Position 300 is a phosphotyrosine (Tyr300). Residue Lys312 is modified to N6-acetyllysine; alternate. Position 312 is an N6-succinyllysine; alternate (Lys312). N6-acetyllysine is present on residues Lys320 and Lys335. Lys384 carries the N6-succinyllysine modification.

In terms of assembly, heterotetramer of two PDHA1 and two PDHB subunits. The heterotetramer interacts with DLAT, and is part of the multimeric pyruvate dehydrogenase complex that contains multiple copies of pyruvate dehydrogenase (E1), dihydrolipoamide acetyltransferase (DLAT, E2) and lipoamide dehydrogenase (DLD, E3). These subunits are bound to an inner core composed of about 48 DLAT and 12 PDHX molecules. It depends on thiamine diphosphate as a cofactor. Requires Mg(2+) as cofactor. Post-translationally, phosphorylation at Ser-231, Ser-292 and Ser-299 by PDK family kinases inactivates the enzyme; for this phosphorylation at a single site is sufficient. Phosphorylation at Ser-292 interferes with access to active site, and thereby inactivates the enzyme. Dephosphorylation at all three sites, i.e. at Ser-231, Ser-292 and Ser-299, is required for reactivation. In terms of processing, acetylation alters the phosphorylation pattern. Deacetylated by SIRT3.

Its subcellular location is the mitochondrion matrix. The catalysed reaction is N(6)-[(R)-lipoyl]-L-lysyl-[protein] + pyruvate + H(+) = N(6)-[(R)-S(8)-acetyldihydrolipoyl]-L-lysyl-[protein] + CO2. With respect to regulation, pyruvate dehydrogenase activity is inhibited by phosphorylation of PDHA1; it is reactivated by dephosphorylation. The pyruvate dehydrogenase complex catalyzes the overall conversion of pyruvate to acetyl-CoA and CO(2), and thereby links the glycolytic pathway to the tricarboxylic cycle. This is Pyruvate dehydrogenase E1 component subunit alpha, somatic form, mitochondrial (PDHA1) from Sus scrofa (Pig).